The primary structure comprises 419 residues: Zinc metalloproteinase-disintegrin-like atrolysin-A (419 aa).

Residues 6 to 202 (RYVELVIVAD…YNPQCILNEP (197 aa)) enclose the Peptidase M12B domain. Glu9 is a Ca(2+) binding site. An N-linked (GlcNAc...) asparagine glycan is attached at Asn72. Ca(2+) is bound at residue Asp93. Cystine bridges form between Cys117-Cys197, Cys157-Cys181, and Cys159-Cys164. Zn(2+) is bound at residue His142. Residue Glu143 is part of the active site. Zn(2+) contacts are provided by His146 and His152. Ca(2+) contacts are provided by Cys197, Asn200, Val212, Asn215, Leu217, Glu219, Glu222, and Asp225. The region spanning 210–296 (PPVCGNELLE…DCPTDDFHRN (87 aa)) is the Disintegrin domain. Cystine bridges form between Cys213–Cys242, Cys224–Cys237, Cys226–Cys232, Cys236–Cys259, Cys250–Cys256, Cys255–Cys281, Cys268–Cys288, Cys275–Cys307, Cys300–Cys312, Cys319–Cys369, Cys334–Cys376, Cys347–Cys357, Cys364–Cys398, and Cys392–Cys403. The D/ECD-tripeptide motif lies at 274–276 (ECD). Residues Asn326, Asn338, and Asn342 are each glycosylated (N-linked (GlcNAc...) asparagine).

The protein belongs to the venom metalloproteinase (M12B) family. P-III subfamily. P-IIIa sub-subfamily. As to quaternary structure, monomer. Requires Zn(2+) as cofactor. In terms of tissue distribution, expressed by the venom gland.

Its subcellular location is the secreted. The catalysed reaction is Cleavage of 3-Asn-|-Gln-4, 5-His-|-Leu-6, 10-His-|-Leu-11, 14-Ala-|-Leu-15 and 16-Tyr-|-Leu-17 in insulin B chain. Removes C-terminal Leu from small peptides.. Its function is as follows. Snake venom zinc metalloproteinase-disintegrin that causes hemorrhage by provoking the degradation of the sub-endothelial matrix proteins (fibronectin, laminin, type IV collagen, nidogen, and gelatins) and disturbances in platelet function. The recombinant cysteine-rich domain interacts with the alpha-2/beta-1 integrin (ITGA2/ITGB1) (collagen receptor), and inhibits the platelet aggregation induced by collagen. The chain is Zinc metalloproteinase-disintegrin-like atrolysin-A from Crotalus atrox (Western diamondback rattlesnake).